A 329-amino-acid polypeptide reads, in one-letter code: Lipoyl synthase (329 aa).

Residues Cys72, Cys77, Cys83, Cys98, Cys102, Cys105, and Ser313 each contribute to the [4Fe-4S] cluster site. The Radical SAM core domain occupies 83 to 303 (CWSHGTATIM…QIGLKKGFFE (221 aa)).

It belongs to the radical SAM superfamily. Lipoyl synthase family. Requires [4Fe-4S] cluster as cofactor.

Its subcellular location is the cytoplasm. The enzyme catalyses [[Fe-S] cluster scaffold protein carrying a second [4Fe-4S](2+) cluster] + N(6)-octanoyl-L-lysyl-[protein] + 2 oxidized [2Fe-2S]-[ferredoxin] + 2 S-adenosyl-L-methionine + 4 H(+) = [[Fe-S] cluster scaffold protein] + N(6)-[(R)-dihydrolipoyl]-L-lysyl-[protein] + 4 Fe(3+) + 2 hydrogen sulfide + 2 5'-deoxyadenosine + 2 L-methionine + 2 reduced [2Fe-2S]-[ferredoxin]. The protein operates within protein modification; protein lipoylation via endogenous pathway; protein N(6)-(lipoyl)lysine from octanoyl-[acyl-carrier-protein]: step 2/2. Functionally, catalyzes the radical-mediated insertion of two sulfur atoms into the C-6 and C-8 positions of the octanoyl moiety bound to the lipoyl domains of lipoate-dependent enzymes, thereby converting the octanoylated domains into lipoylated derivatives. This Legionella pneumophila (strain Paris) protein is Lipoyl synthase.